The sequence spans 152 residues: 6,7-dimethyl-8-ribityllumazine synthase (152 aa).

5-amino-6-(D-ribitylamino)uracil contacts are provided by residues Phe21, 55-57, and 79-81; these read AFE and CVI. Residue 84–85 participates in (2S)-2-hydroxy-3-oxobutyl phosphate binding; sequence AT. His87 (proton donor) is an active-site residue. 5-amino-6-(D-ribitylamino)uracil is bound at residue Phe112. A (2S)-2-hydroxy-3-oxobutyl phosphate-binding site is contributed by Arg126.

It belongs to the DMRL synthase family. In terms of assembly, forms an icosahedral capsid composed of 60 subunits, arranged as a dodecamer of pentamers.

It catalyses the reaction (2S)-2-hydroxy-3-oxobutyl phosphate + 5-amino-6-(D-ribitylamino)uracil = 6,7-dimethyl-8-(1-D-ribityl)lumazine + phosphate + 2 H2O + H(+). The protein operates within cofactor biosynthesis; riboflavin biosynthesis; riboflavin from 2-hydroxy-3-oxobutyl phosphate and 5-amino-6-(D-ribitylamino)uracil: step 1/2. Functionally, catalyzes the formation of 6,7-dimethyl-8-ribityllumazine by condensation of 5-amino-6-(D-ribitylamino)uracil with 3,4-dihydroxy-2-butanone 4-phosphate. This is the penultimate step in the biosynthesis of riboflavin. This is 6,7-dimethyl-8-ribityllumazine synthase from Staphylococcus haemolyticus (strain JCSC1435).